The following is a 342-amino-acid chain: Methionyl-tRNA formyltransferase (342 aa).

(6S)-5,6,7,8-tetrahydrofolate is bound at residue 108–111 (SLLP).

The protein belongs to the Fmt family.

It catalyses the reaction L-methionyl-tRNA(fMet) + (6R)-10-formyltetrahydrofolate = N-formyl-L-methionyl-tRNA(fMet) + (6S)-5,6,7,8-tetrahydrofolate + H(+). In terms of biological role, attaches a formyl group to the free amino group of methionyl-tRNA(fMet). The formyl group appears to play a dual role in the initiator identity of N-formylmethionyl-tRNA by promoting its recognition by IF2 and preventing the misappropriation of this tRNA by the elongation apparatus. This is Methionyl-tRNA formyltransferase from Prochlorococcus marinus (strain MIT 9303).